Here is a 169-residue protein sequence, read N- to C-terminus: uncharacterized protein (169 aa).

Residues 4–160 (IEVKRLLVNY…EGVKEQLSED (157 aa)) form the N-acetyltransferase domain.

This is an uncharacterized protein from Halalkalibacterium halodurans (strain ATCC BAA-125 / DSM 18197 / FERM 7344 / JCM 9153 / C-125) (Bacillus halodurans).